Consider the following 335-residue polypeptide: NmrA-like family domain-containing oxidoreductase ptmS (335 aa).

NADP(+) is bound by residues 12-17 (GATGNQ), 39-43 (RDPNS), 60-61 (DG), 81-88 (INSDDPVF), Lys139, and 163-166 (FLEN). Residues 161–206 (GYFLENFLFKQGAFIMGGFPWETDAEGYLTWKVPYWGGEEQIPFLS) are interaction with ASS1.

It belongs to the NmrA-type oxidoreductase family.

Its pathway is secondary metabolite biosynthesis. Its function is as follows. NmrA-like family domain-containing oxidoreductase; part of the gene cluster that mediates the biosynthesis of the indole diterpenes penitrems. The geranylgeranyl diphosphate (GGPP) synthase ptmG catalyzes the first step in penitrem biosynthesis via conversion of farnesyl pyrophosphate and isopentyl pyrophosphate into geranylgeranyl pyrophosphate (GGPP). Condensation of indole-3-glycerol phosphate with GGPP by the prenyl transferase ptmC then forms 3-geranylgeranylindole (3-GGI). Epoxidation by the FAD-dependent monooxygenase ptmM leads to a epoxidized-GGI that is substrate of the terpene cyclase ptmB for cyclization to yield paspaline. Paspaline is subsequently converted to 13-desoxypaxilline by the cytochrome P450 monooxygenase ptmP, the latter being then converted to paxilline by the cytochrome P450 monooxygenase ptmQ. Paxilline is converted to beta-paxitriol via C-10 ketoreduction by the short-chain dehydrogenase ptmH which can be monoprenylated at the C-20 by the indole diterpene prenyltransferase ptmD. A two-step elimination (acetylation and elimination) process performed by the O-acetyltransferase ptmV and ptmI leads to the production of the prenylated form of penijanthine. The FAD-linked oxidoreductase ptmO then converts the prenylated form of penijanthine into PC-M5 which is in turn transformed into PC-M4 by the aromatic dimethylallyltransferase ptmE. Five sequential oxidative transformations performed by the cytochrome P450 monooxygenases ptmK, ptmU, ptmL, ptmN and ptmJ yield the various penitrem compounds. PtmK, ptmU and ptmM are involved in the formation of the key bicyclic ring of penitrem C via the formation of the intermediates secopenitrem D and penitrem D. PtmL catalyzes the epoxidation of penitrem D and C to yield penitrem B and F, respectively. PtmJ catalyzes the last benzylic hydroxylation to convert penitrem B to prenitrem E and penitrem F to penitrem A. In Penicillium ochrochloron, this protein is NmrA-like family domain-containing oxidoreductase ptmS.